Reading from the N-terminus, the 529-residue chain is ATP synthase F(1) complex catalytic subunit beta, mitochondrial (529 aa).

Residues 1-46 constitute a mitochondrion transit peptide; the sequence is MLSLVGRVASASASGALRGLSPSAALPQAQLLLRAAPAGVHPARDY. Residue Ser106 is glycosylated (O-linked (GlcNAc) serine). Lys124, Lys133, and Lys161 each carry N6-acetyllysine; alternate. Lys124, Lys133, and Lys161 each carry N6-succinyllysine; alternate. N6-acetyllysine is present on Lys198. ADP contacts are provided by Gly209, Val210, Gly211, Lys212, Thr213, and Val214. Gly209 is an ATP binding site. Phosphate is bound by residues Gly209, Val210, Gly211, Lys212, and Thr213. Residues Gly211, Lys212, Thr213, and Val214 each coordinate ATP. Residue Thr213 participates in Mg(2+) binding. Glu238 contributes to the Mg(2+) binding site. An ATP-binding site is contributed by Arg239. N6-acetyllysine; alternate occurs at positions 259 and 264. N6-succinyllysine; alternate is present on residues Lys259 and Lys264. Residue Thr312 is modified to Phosphothreonine. Lys426 carries the N6-acetyllysine modification. Ser433 is subject to Phosphoserine. N6-acetyllysine occurs at positions 480 and 485. Lys522 is modified (N6-acetyllysine; alternate). Lys522 is modified (N6-succinyllysine; alternate). Residue Ser529 is modified to Phosphoserine.

The protein belongs to the ATPase alpha/beta chains family. In terms of assembly, homotrimer. Component of the ATP synthase complex composed at least of ATP5F1A/subunit alpha, ATP5F1B/subunit beta, ATP5MC1/subunit c (homooctomer), MT-ATP6/subunit a, MT-ATP8/subunit 8, ATP5ME/subunit e, ATP5MF/subunit f, ATP5MG/subunit g, ATP5MK/subunit k, ATP5MJ/subunit j, ATP5F1C/subunit gamma, ATP5F1D/subunit delta, ATP5F1E/subunit epsilon, ATP5PF/subunit F6, ATP5PB/subunit b, ATP5PD/subunit d, ATP5PO/subunit OSCP. ATP synthase complex consists of a soluble F(1) head domain (subunits alpha(3) and beta(3)) - the catalytic core - and a membrane F(0) domain - the membrane proton channel (subunits c, a, 8, e, f, g, k and j). These two domains are linked by a central stalk (subunits gamma, delta, and epsilon) rotating inside the F1 region and a stationary peripheral stalk (subunits F6, b, d, and OSCP). Interacts with PPIF. Interacts with BCL2L1 isoform BCL-X(L); the interaction mediates the association of BCL2L1 isoform BCL-X(L) with the mitochondrial membrane F(1)F(0) ATP synthase and enhances neurons metabolic efficiency. Interacts with CLN5 and PPT1. Interacts with S100A1; this interaction increases F1-ATPase activity. Interacts with MTLN. Interacts with TTC5/STRAP; the interaction results in decreased mitochondrial ATP production. Post-translationally, acetylation of Lys-133 is observed in liver mitochondria from fasted mice but not from fed mice.

The protein resides in the mitochondrion inner membrane. It carries out the reaction ATP + H2O + 4 H(+)(in) = ADP + phosphate + 5 H(+)(out). Its function is as follows. Catalytic subunit beta, of the mitochondrial membrane ATP synthase complex (F(1)F(0) ATP synthase or Complex V) that produces ATP from ADP in the presence of a proton gradient across the membrane which is generated by electron transport complexes of the respiratory chain. ATP synthase complex consist of a soluble F(1) head domain - the catalytic core - and a membrane F(1) domain - the membrane proton channel. These two domains are linked by a central stalk rotating inside the F(1) region and a stationary peripheral stalk. During catalysis, ATP synthesis in the catalytic domain of F(1) is coupled via a rotary mechanism of the central stalk subunits to proton translocation. In vivo, can only synthesize ATP although its ATP hydrolase activity can be activated artificially in vitro. With the subunit alpha (ATP5F1A), forms the catalytic core in the F(1) domain. The sequence is that of ATP synthase F(1) complex catalytic subunit beta, mitochondrial from Mus musculus (Mouse).